A 396-amino-acid chain; its full sequence is Subtilisin-like protease 5 (396 aa).

Residues 1–20 form the signal peptide; it reads MTGFFTFLSFSLAALSVTNA. The propeptide occupies 21 to 116; the sequence is AHILSVPKGA…VEPDAIISQH (96 aa). Residues 37 to 113 form the Inhibitor I9 domain; the sequence is YIVVMKDDTS…VAFVEPDAII (77 aa). N63 carries N-linked (GlcNAc...) asparagine glycosylation. The Peptidase S8 domain occupies 125 to 396; sequence PWGLSRLSNR…SRLLYNGSGR (272 aa). Residues D156 and H187 each act as charge relay system in the active site. N-linked (GlcNAc...) asparagine glycans are attached at residues N230 and N248. Catalysis depends on S342, which acts as the Charge relay system. Over residues 376–389 the composition is skewed to polar residues; that stretch reads PTIRNPGPDTTSRL. Residues 376-396 form a disordered region; the sequence is PTIRNPGPDTTSRLLYNGSGR. N-linked (GlcNAc...) asparagine glycosylation occurs at N392.

Belongs to the peptidase S8 family.

Its subcellular location is the secreted. In terms of biological role, secreted subtilisin-like serine protease with keratinolytic activity that contributes to pathogenicity. The polypeptide is Subtilisin-like protease 5 (SUB5) (Trichophyton tonsurans (Scalp ringworm fungus)).